Reading from the N-terminus, the 570-residue chain is Set1/Ash2 histone methyltransferase complex subunit ash-2 (570 aa).

The PHD-type zinc finger occupies 19–76 (TTVCYCDGKRELGSVEVVCSTCLKWFHGRCLKEFHELNSNGVPFMICYTFTCKQCRPT). Positions 201-242 (NREPRHIELPPIEGPKTRGASKRRHAEAPVTGKKQKLAADYS) are disordered. In terms of domain architecture, B30.2/SPRY spans 270-468 (PNVPEDPAWN…TLVEMPGSYI (199 aa)).

Component of the SET2 complex (also known as the SET1/COMPASS complex), which contains at least set-2, swd-2.1, cfp-1, rbbp-5, wdr-5.1, dpy-30 and ash-2. Within the complex, interacts with cfp-1 and wdr-5.1. In terms of tissue distribution, expressed in somatic and germline tissues (at protein level).

Its subcellular location is the nucleus. Functionally, component of the set-2/ash-2 histone methyltransferase (HMT) complex. Required for the di- and trimethylation at 'Lys-4' of histone H3, a mark associated with epigenetic transcriptional activation. Implicated in the epigenetic inheritance of lifespan over several generations. Functions as a transcriptional regulator. Acts in the germline to limit the longevity of the soma, probably by regulating a lipid metabolism pathway that signals from the germline to the intestine, thereby preventing accumulation of mono-unsaturated fatty acids. The chain is Set1/Ash2 histone methyltransferase complex subunit ash-2 from Caenorhabditis elegans.